The primary structure comprises 265 residues: Speedy protein E12 (265 aa).

The segment at 1-80 is disordered; that stretch reads MGQILGKIMM…EPEKELAPEP (80 aa). Positions 13-23 are enriched in low complexity; it reads QPQPQEEQSPQ. Positions 66-80 are enriched in acidic residues; that stretch reads DESDDEPEKELAPEP.

Belongs to the Speedy/Ringo family.

This is Speedy protein E12 from Homo sapiens (Human).